We begin with the raw amino-acid sequence, 501 residues long: ALFYYSLLSLSFIITIKILLKITSRRLKNLPPGPPTIPIIGNLHHLKHPLHRTFTTLSQTYGDIFSLWFGSRLVVVVSSPSLAHECFTKNDIILANRPRFLTGKYIFYNYTTLGSASYGDHWRNLRRITTIDVLSNNRLNSFLGVRRDETNRLIQKLLKDVVSEGFGFTKVELRPRLTEMTFNAMMRMISGKRYYGDDGDVSDVEEAKQFREIISEMMSLLGANNKGDFLPLLRVVDLDNLEKRCKRIAKRSNAFLEGLIEEHRRGNIHSDGGTMIDHLLKLSESQPEYYSDHLIKGLIQGMLLAGTDTSAVTIEWVMSELLNHPEVLKKAKEELDTQIGKNKLVDEQDLSKLPYLQNIISETLRLHPPAPLLLPHYSSEDCTIGEFNVPKDTIILTNVWGIHRDPKHWNDALSFKPERFEKEEEVNKVMAFGLGRRACPGLSLAQRTVGFTVGLLIQCFEWERESEEKLDMMEGKGITMPMKIPLRAMCKALPIANDVTK.

The chain crosses the membrane as a helical span at residues leucine 7–serine 24. Cysteine 439 serves as a coordination point for heme.

The protein belongs to the cytochrome P450 family. Requires heme as cofactor. Expressed constitutively in leaves and stems, but not in roots.

It localises to the endoplasmic reticulum membrane. It carries out the reaction formononetin + reduced [NADPH--hemoprotein reductase] + O2 = calycosin + oxidized [NADPH--hemoprotein reductase] + H2O + H(+). Involved in the biosynthesis of the pterocarpin phytoalexins. Acts on isoflavones with a 4'-methoxy group on the B-ring, such as biochanin A, formononetin and 2'-hydroxyformononetin. Has a low activity with daidzein and pseudobaptigenin, and no activity with the 7-O-methylated isoflavonoids isoformononetin and prunetin. This is Isoflavone 3'-hydroxylase from Medicago truncatula (Barrel medic).